The chain runs to 314 residues: 2,3-dihydroxyphenylpropionate/2,3-dihydroxicinnamic acid 1,2-dioxygenase 1 (314 aa).

The active-site Proton donor is His115. Residue His179 is the Proton acceptor of the active site.

The protein belongs to the LigB/MhpB extradiol dioxygenase family. As to quaternary structure, homotetramer. It depends on Fe(2+) as a cofactor.

The enzyme catalyses 3-(2,3-dihydroxyphenyl)propanoate + O2 = (2Z,4E)-2-hydroxy-6-oxonona-2,4-dienedioate + H(+). It catalyses the reaction (2E)-3-(2,3-dihydroxyphenyl)prop-2-enoate + O2 = (2Z,4E,7E)-2-hydroxy-6-oxonona-2,4,7-trienedioate + H(+). It functions in the pathway aromatic compound metabolism; 3-phenylpropanoate degradation. Its function is as follows. Catalyzes the non-heme iron(II)-dependent oxidative cleavage of 2,3-dihydroxyphenylpropionic acid and 2,3-dihydroxicinnamic acid into 2-hydroxy-6-ketononadienedioate and 2-hydroxy-6-ketononatrienedioate, respectively. This Pseudomonas putida (Arthrobacter siderocapsulatus) protein is 2,3-dihydroxyphenylpropionate/2,3-dihydroxicinnamic acid 1,2-dioxygenase 1.